A 107-amino-acid chain; its full sequence is Iron-binding protein IscA (107 aa).

Residues Cys35, Cys99, and Cys101 each coordinate Fe cation.

The protein belongs to the HesB/IscA family. Homodimer; may form tetramers and higher multimers. It depends on Fe cation as a cofactor.

Is able to transfer iron-sulfur clusters to apo-ferredoxin. Multiple cycles of [2Fe2S] cluster formation and transfer are observed, suggesting that IscA acts catalytically. Recruits intracellular free iron so as to provide iron for the assembly of transient iron-sulfur cluster in IscU in the presence of IscS, L-cysteine and the thioredoxin reductase system TrxA/TrxB. The protein is Iron-binding protein IscA of Enterobacter sp. (strain 638).